Reading from the N-terminus, the 312-residue chain is Serine acetyltransferase 5 (312 aa).

Positions 1-17 (MPPAGELRHQSPSKEKL) are enriched in basic and acidic residues. Residues 1–25 (MPPAGELRHQSPSKEKLSSVTQSDE) form a disordered region.

It belongs to the transferase hexapeptide repeat family. In terms of assembly, homomultimer. In terms of tissue distribution, mostly expressed in stems, flowers and siliques. Localized in vascular tissues, particularly in phloem.

The protein resides in the cytoplasm. The enzyme catalyses L-serine + acetyl-CoA = O-acetyl-L-serine + CoA. The protein operates within amino-acid biosynthesis; L-cysteine biosynthesis; L-cysteine from L-serine: step 1/2. Its activity is regulated as follows. Feedback inhibitions by L-Ser and acetyl-CoA. This is Serine acetyltransferase 5 (SAT5) from Arabidopsis thaliana (Mouse-ear cress).